Reading from the N-terminus, the 91-residue chain is Small ribosomal subunit protein uS19 (91 aa).

It belongs to the universal ribosomal protein uS19 family.

Its function is as follows. Protein S19 forms a complex with S13 that binds strongly to the 16S ribosomal RNA. This chain is Small ribosomal subunit protein uS19, found in Psychrobacter sp. (strain PRwf-1).